We begin with the raw amino-acid sequence, 176 residues long: MGIAVEARKVYPYPFQHVVTSYLNKYPTPLEKHVLSVKTVEEKTDPATGVVYRKRIATCNNVIPSFLRRCSILKVSNVYLEEESWLDMKTRVMTLETHCLTWAQYATMKEESVYKECTENSNWTEFTQKGTITITGAGFLNRVLETFAQTFLSHGVKKSISIMETILRERCGCPFS.

The 175-residue stretch at 1–175 (MGIAVEARKV…ILRERCGCPF (175 aa)) folds into the PRELI/MSF1 domain.

The polypeptide is PRELI domain-containing protein 2 (prelid2) (Xenopus tropicalis (Western clawed frog)).